The primary structure comprises 1613 residues: MIPMIYKEMCPNCNGEITSERLAIGVCEKCLKEENVFEKLKLCEKLREEKTLKNLKDYCIIWNEFKEFEEFVKDLGFELLSIQKMWAKRVLKNKSFSIVVPTGVGKSFFGILMSLFLAKKGKRCYIILPTTLLVKQTYEKISSLTEKNNLNIRVVAYHSELSTKEKKEVKERIENNDYDVLITTSNYLTKNMPKCKFDFVFVDDVDALLKASKNIDRTLKLLGFDEEIINEAYKIIYLIKIGKIEDAMKKREILKKKISKIKHGCLIIASATGKSYGDRVKLYRELLDFEIGFGMNKLRDVVDIYDEEFSKEKILEYIKLFGSGGIVFVSIDYGVEKAQEIEKYLLENNIKAKLIHSKDKKGFDDFREGKIDVLIGVASYYGVLVRGLDMPERVRYAIFYGIPKFKIRLKEYINSLKEKGELKEDINIEGKTEEEIRQIITEKLKIKNFSLRKEDDEYLLLIPDVKTYIQASGRTSRMTEFGLTKGASIVLVDEKEIFEALKKYMLFMYESEFKRIDEVNLEELIKKIDEDREKIKVGRAKGKVPDLLKSVLMVVESPNKARTIANFFGKPSVRKINNRNVYEVCIGDLNLIITASGGHVFDLVTKEGFYGVKIENNLYIPIYTSIKKVNGEQFTDQKDLEELIKQLMEKGERVNAMDAKENIEIIREIADEVDAIFIATDIDTEGEKIGYDIAINALPFNRNIYRVGFNEITKRAILKAVESFKKGEELSLDENKVKGQVVRRIEDRWIGFRLSQKLWEVFNKNYLSAGRVQTPVLGWIIERYNEHKIKVPYLSLKLENDIYIGKIWEDEFDKDEVEVEVKVYEKEIPPLPPFTTDTLLEEATKRFGLSTDEIMSIAQELFELGLCLTPDTYVVLGDGRIETIEDIVNAKERNVLSLDLDNLSIKIDTAIKFWKLRYNGNLSKITLSNNYELKATPDHCLLVLRDNQLKWIPAKDIKENDYIAMPFNYKVERKPISLLNLLKYLDITDVLIEFDENSTIFEKIAEYIRNNIKTSTKYKYLRNRRVPLKYLIEWNFDLDEIEKEAKYIYKSVAGTKKIPLFKLDERFWYFAGLVLGDGSIQDSKIRIAQTPLKDVKSILDETFPFLHNWISGNQVIISNPIIAEILEKLGMRNGKLNGIIFSLPESYINALIAGYFDTDGCFSLLYDKKAKKHNLRMVLTSKRRDVLEKIGIYLNSIGILNTLHKSREVYSLIISNKSLETFKEKIAKYLKIRKEAFINGYKTYKKEHEERFECDLLPVKEVFKKLTFEKGRKEILKDSKIHIENWYKEKTNNIPREKLKTVLRYANNSEHKEFLEKIVNGDISFVRVKKVENIPYDGYVYDLSIKHNQNFISNGVISHNCTYHRTSSTRVSLDGMRVAREYLKLNNLEDYLKNREYFMEGAHECIRPTKPMNTDELIEFLKENNIKLTKNHIKVYDLIFRRFIASQMKEAVVEYEEIYIKDLDEKVEGYVDIKFDGWSRIYNLKLKKLPRIEKSSLKVLDKKLRKIPKVPLYDEGEVVKLMKERGIGRPSTYAQIIKKLLDRGYVVKSKDKNKLIPTKLGIEVYNYLINNYPHLISEERTRELEEIMDKIENGEVDYIEVLKALHEEILSIR.

The RG N-terminal-type zinc finger occupies 1–38; the sequence is MIPMIYKEMCPNCNGEITSERLAIGVCEKCLKEENVFE. 4 residues coordinate Zn(2+): cysteine 10, cysteine 13, cysteine 27, and cysteine 30. Residues glutamine 83 and 100 to 107 contribute to the ATP site; that span reads VPTGVGKS. Residues 87-291 form the Helicase ATP-binding domain; it reads AKRVLKNKSF…LYRELLDFEI (205 aa). The short motif at 203-206 is the DEAD box element; that stretch reads DDVD. Residues 310–525 enclose the Helicase C-terminal domain; sequence SKEKILEYIK…IDEVNLEELI (216 aa). The interval 546-1613 is topoisomerase I; the sequence is DLLKSVLMVV…ALHEEILSIR (1068 aa). The region spanning 550–712 is the Toprim domain; that stretch reads SVLMVVESPN…NIYRVGFNEI (163 aa). 2 residues coordinate Mg(2+): glutamate 556 and aspartate 681. A Topo IA-type catalytic domain is found at 733 to 1613; that stretch reads DENKVKGQVV…ALHEEILSIR (881 aa). Residues 1070–1199 enclose the DOD-type homing endonuclease domain; that stretch reads FAGLVLGDGS…IGIYLNSIGI (130 aa). The active-site O-(5'-phospho-DNA)-tyrosine intermediate is tyrosine 1363.

In the N-terminal section; belongs to the DEAD box helicase family. DDVD subfamily. It in the C-terminal section; belongs to the type IA topoisomerase family. Monomer. It depends on Zn(2+) as a cofactor. Mg(2+) is required as a cofactor. This protein undergoes a protein self splicing that involves a post-translational excision of the intervening region (intein) followed by peptide ligation.

The protein resides in the cytoplasm. It carries out the reaction ATP + H2O = ADP + phosphate + H(+). In terms of biological role, modifies the topological state of DNA by introducing positive supercoils in an ATP-dependent process, increasing the linking number in steps of +1. Binds to single-stranded DNA, transiently cleaves and then rejoins the ends, introducing a positive supercoil in the process. The scissile phosphodiester is attacked by the catalytic tyrosine of the enzyme, resulting in the formation of a DNA-(5'-phosphotyrosyl)-enzyme intermediate. Probably involved in rewinding DNA strands in regions of the chromosome that have opened up to allow replication, transcription, DNA repair and/or for DNA protection. The chain is Reverse gyrase from Methanocaldococcus jannaschii (strain ATCC 43067 / DSM 2661 / JAL-1 / JCM 10045 / NBRC 100440) (Methanococcus jannaschii).